A 333-amino-acid chain; its full sequence is MASAVFRLLQQGPRRLLAPAVPTLAPPVRGVKKGFRAAFRFQKELERWRLLRCPPPPVRRSEKPNWDYHAEVQAFGSRLQETFSLDLLKTAFINSCYIKSEEAKRQSLGIEKEAALLNLKDNQELFEQGLSFSHRCLTQFLEDEFPDLPAEGTESLVSFLTGEAVVCHVARNLAVEQLTLSAEFPVPLPVLRQTFFAVIGALLQSSGPERAALFIRDFLITQMTGKELFEMWTVVNPMGLLVEELKKRNISAPESRLTRQSGSTTALPLYFVGLYCDRKLIAEGPGETVLVAEEEAARVALRKLYGFTENRRPWDYSKPKESPKRAEQTSVAS.

A mitochondrion-targeting transit peptide spans 1-30; it reads MASAVFRLLQQGPRRLLAPAVPTLAPPVRG. Residues 86 to 228 enclose the RNase III domain; sequence DLLKTAFINS…LITQMTGKEL (143 aa). Residues 236 to 306 enclose the DRBM domain; sequence NPMGLLVEEL…ARVALRKLYG (71 aa). Basic and acidic residues predominate over residues 311 to 327; that stretch reads RRPWDYSKPKESPKRAE. Residues 311-333 are disordered; the sequence is RRPWDYSKPKESPKRAEQTSVAS.

It belongs to the ribonuclease III family. Mitochondrion-specific ribosomal protein mL44 subfamily. As to quaternary structure, component of the mitochondrial ribosome large subunit (39S) which comprises a 16S rRNA and about 50 distinct proteins.

It is found in the mitochondrion. Its function is as follows. Component of the 39S subunit of mitochondrial ribosome. May have a function in the assembly/stability of nascent mitochondrial polypeptides exiting the ribosome. The sequence is that of Large ribosomal subunit protein mL44 (Mrpl44) from Mus musculus (Mouse).